The following is a 147-amino-acid chain: Phospholipase A2 inhibitor subunit A (147 aa).

The C-type lectin domain occupies 62-143 (EICRQAGGRI…DDNLLVVCEF (82 aa)). Disulfide bonds link C64–C141 and C119–C133. N-linked (GlcNAc...) asparagine glycosylation occurs at N103.

The protein belongs to the alpha-type phospholipase A2 inhibitor family. As to quaternary structure, homotrimer; non-covalently linked. Glycosylated. Expressed by the liver.

The protein localises to the secreted. Functionally, inhibits the enzymatic activity of the acidic phospholipase A2 (PLA2). This Gloydius brevicaudus siniticus (Chinese mamushi) protein is Phospholipase A2 inhibitor subunit A.